Reading from the N-terminus, the 262-residue chain is 3-methyl-2-oxobutanoate hydroxymethyltransferase (262 aa).

Mg(2+) contacts are provided by D43 and D82. Residues 43–44 (DS), D82, and K111 each bind 3-methyl-2-oxobutanoate. A Mg(2+)-binding site is contributed by E113. The active-site Proton acceptor is the E180.

The protein belongs to the PanB family. As to quaternary structure, homodecamer; pentamer of dimers. Mg(2+) serves as cofactor.

It is found in the cytoplasm. It catalyses the reaction 3-methyl-2-oxobutanoate + (6R)-5,10-methylene-5,6,7,8-tetrahydrofolate + H2O = 2-dehydropantoate + (6S)-5,6,7,8-tetrahydrofolate. It functions in the pathway cofactor biosynthesis; coenzyme A biosynthesis. In terms of biological role, catalyzes the reversible reaction in which hydroxymethyl group from 5,10-methylenetetrahydrofolate is transferred onto alpha-ketoisovalerate to form ketopantoate. The polypeptide is 3-methyl-2-oxobutanoate hydroxymethyltransferase (Pyrobaculum aerophilum (strain ATCC 51768 / DSM 7523 / JCM 9630 / CIP 104966 / NBRC 100827 / IM2)).